Consider the following 706-residue polypeptide: MEKTFSLSRRDDGIALLTMDVPGETMNTLKAQFAPEITAILQEIKADSSIKGLVLISGKADSFVAGADISMLDACETAEDARLLSRQGHHVFAELEGLNIPVVAAIHGACLGGGLELALACHQRVCSDSSKTMLGVPEVQLGLLPGGGGTQRLPRLIGIAKALDLMLTGKQVRPKQAVKMGLVDDVVPESILLDTAIEMALAGKKTRKPLKQPLVTKLLEGTPVGRNIMFDQATKQVLKKTQGNYPSPLKIIDCVREGMAKGMEKGLEVEAAHFGALVATPESAALRSIFFATTEMKKETGAGDAKPRKVAKAVVLGGGLMGGGIASVTTTKAKVPVRVKDISDKGLSNALGYAYKLLDKGVKRRHMTSAERDKLMALMTTTTEYRGVKDADIVVEAVFEDLNLKHQMVRDIERECGEHTIFASNTSSLPITQIAAAASRPENVIGLHYFSPVEKMPLVEVIAHEKTSPETIATTVAFARKQGKTPIVVKDCAGFYVNRILALYMNEAAQLLLEGQAVDHLDKALVKFGFPVGPMTLLDEVGIDVGAKISPILEKELGERFKAPAAFDKLMADDRKGRKNGKGFYLYGKAAKKGKKVDESVYSLLGLTPATGKEAGEIAERCVVQMLNEAVRCLEEGIIASPRDGDIGAIFGIGFPPFLGGPFRYMDTLGAAKMVRLLEGYQSKYGDRFAPAALLKAMAAEGKTFY.

An enoyl-CoA hydratase region spans residues 1-188 (MEKTFSLSRR…KMGLVDDVVP (188 aa)). Positions 308 to 706 (RKVAKAVVLG…AMAAEGKTFY (399 aa)) are 3-hydroxyacyl-CoA dehydrogenase.

The protein in the N-terminal section; belongs to the enoyl-CoA hydratase/isomerase family. It in the central section; belongs to the 3-hydroxyacyl-CoA dehydrogenase family. Heterotetramer of two alpha chains (FadJ) and two beta chains (FadI).

Its subcellular location is the cytoplasm. It carries out the reaction a (3S)-3-hydroxyacyl-CoA = a (2E)-enoyl-CoA + H2O. It catalyses the reaction a 4-saturated-(3S)-3-hydroxyacyl-CoA = a (3E)-enoyl-CoA + H2O. The enzyme catalyses a (3S)-3-hydroxyacyl-CoA + NAD(+) = a 3-oxoacyl-CoA + NADH + H(+). The catalysed reaction is (3S)-3-hydroxybutanoyl-CoA = (3R)-3-hydroxybutanoyl-CoA. It functions in the pathway lipid metabolism; fatty acid beta-oxidation. In terms of biological role, catalyzes the formation of a hydroxyacyl-CoA by addition of water on enoyl-CoA. Also exhibits 3-hydroxyacyl-CoA epimerase and 3-hydroxyacyl-CoA dehydrogenase activities. The protein is Fatty acid oxidation complex subunit alpha of Shewanella amazonensis (strain ATCC BAA-1098 / SB2B).